The sequence spans 1157 residues: DNA-directed RNA polymerase subunit beta (1157 aa).

Belongs to the RNA polymerase beta chain family. In terms of assembly, the RNAP catalytic core consists of 2 alpha, 1 beta, 1 beta' and 1 omega subunit. When a sigma factor is associated with the core the holoenzyme is formed, which can initiate transcription.

The catalysed reaction is RNA(n) + a ribonucleoside 5'-triphosphate = RNA(n+1) + diphosphate. Its function is as follows. DNA-dependent RNA polymerase catalyzes the transcription of DNA into RNA using the four ribonucleoside triphosphates as substrates. The polypeptide is DNA-directed RNA polymerase subunit beta (Tropheryma whipplei (strain TW08/27) (Whipple's bacillus)).